Reading from the N-terminus, the 414-residue chain is Alanine--glyoxylate aminotransferase (414 aa).

A mitochondrion-targeting transit peptide spans 1–23 (MFRALARASATLGPQVAGWARTM). K231 is modified (N6-(pyridoxal phosphate)lysine). K247 is modified (N6-acetyllysine; alternate). N6-succinyllysine; alternate is present on K247. N6-acetyllysine occurs at positions 256 and 334. R382 contacts substrate. The Microbody targeting signal signature appears at 412 to 414 (NKL).

The protein belongs to the class-V pyridoxal-phosphate-dependent aminotransferase family. Homodimer. Requires pyridoxal 5'-phosphate as cofactor.

Its subcellular location is the peroxisome. The protein resides in the mitochondrion matrix. The catalysed reaction is L-serine + pyruvate = 3-hydroxypyruvate + L-alanine. It carries out the reaction glyoxylate + L-alanine = glycine + pyruvate. In terms of biological role, catalyzes the transamination of glyoxylate to glycine and contributes to the glyoxylate detoxification. Its function is as follows. Catalyzes the transamination between L-serine and pyruvate and contributes to gluconeogenesis from the L-serine metabolism. The sequence is that of Alanine--glyoxylate aminotransferase from Felis catus (Cat).